The following is a 130-amino-acid chain: Small ribosomal subunit protein uS9 (130 aa).

The protein belongs to the universal ribosomal protein uS9 family.

In Halorhodospira halophila (strain DSM 244 / SL1) (Ectothiorhodospira halophila (strain DSM 244 / SL1)), this protein is Small ribosomal subunit protein uS9.